Here is a 62-residue protein sequence, read N- to C-terminus: Conotoxin reg3.7 (62 aa).

An N-terminal signal peptide occupies residues 1–15; that stretch reads RVLLTICLLLFPLSA. Residues 16–45 constitute a propeptide that is removed on maturation; sequence LPLDGDQPADQPARHMQSAERNPRFDPVKR. The disordered stretch occupies residues 17–37; it reads PLDGDQPADQPARHMQSAERN. 3 cysteine pairs are disulfide-bonded: cysteine 46-cysteine 60, cysteine 47-cysteine 58, and cysteine 52-cysteine 61. At cysteine 61 the chain carries Cysteine amide.

This sequence belongs to the conotoxin M superfamily. In terms of tissue distribution, expressed by the venom duct.

The protein resides in the secreted. This chain is Conotoxin reg3.7, found in Conus regius (Crown cone).